A 313-amino-acid polypeptide reads, in one-letter code: Porphobilinogen deaminase (313 aa).

Residue cysteine 242 is modified to S-(dipyrrolylmethanemethyl)cysteine.

This sequence belongs to the HMBS family. In terms of assembly, monomer. It depends on dipyrromethane as a cofactor.

It carries out the reaction 4 porphobilinogen + H2O = hydroxymethylbilane + 4 NH4(+). It participates in porphyrin-containing compound metabolism; protoporphyrin-IX biosynthesis; coproporphyrinogen-III from 5-aminolevulinate: step 2/4. Tetrapolymerization of the monopyrrole PBG into the hydroxymethylbilane pre-uroporphyrinogen in several discrete steps. This chain is Porphobilinogen deaminase, found in Yersinia pestis bv. Antiqua (strain Angola).